A 512-amino-acid chain; its full sequence is Polyamine oxidase 1 (512 aa).

2 residues coordinate FAD: Glu38 and Arg46. Positions 448–470 are disordered; it reads DRMAEPLPRGPDAAADERPPSPR. Glu476 contributes to the FAD binding site.

The protein belongs to the flavin monoamine oxidase family. The cofactor is FAD.

Its subcellular location is the cytoplasm. It carries out the reaction spermine + O2 + H2O = 3-aminopropanal + spermidine + H2O2. The enzyme catalyses N(1)-acetylspermine + O2 + H2O = 3-acetamidopropanal + spermidine + H2O2. It catalyses the reaction norspermine + O2 + H2O = norspermidine + 3-aminopropanal + H2O2. The catalysed reaction is thermospermine + O2 + H2O = 3-aminopropanal + spermidine + H2O2. The protein operates within amine and polyamine degradation; spermine degradation. Functionally, flavoenzyme involved in polyamine back-conversion. Catalyzes the oxidation of the secondary amino group of polyamines, such as spermine and its acetyl derivatives. Substrate preference is thermospermine &gt; spermine &gt; norspermine &gt; N(1)-acetylspermine. No activity detected when putrescine or spermidine are used as substrates. Plays an important role in the regulation of polyamine intracellular concentration. The sequence is that of Polyamine oxidase 1 from Oryza sativa subsp. japonica (Rice).